The following is a 534-amino-acid chain: Echilunin cytochrome P450 monooxygenase (534 aa).

The chain crosses the membrane as a helical span at residues 18 to 38 (VSPAALSWAVVAIYLGTFFWL). Cys441 lines the heme pocket.

It belongs to the cytochrome P450 family. Heme serves as cofactor.

The protein resides in the membrane. It carries out the reaction preechinulin + reduced [NADPH--hemoprotein reductase] + O2 = neoechinulin A + oxidized [NADPH--hemoprotein reductase] + 2 H2O + H(+). It functions in the pathway secondary metabolite biosynthesis. It participates in alkaloid biosynthesis. Its function is as follows. Cytochrome P450 monooxygenase; part of the gene cluster that mediates the biosynthesis of echinulin family alkaloid. The pathway begins with the biosynthesis of the cyclic dipeptide cyclo-L-Trp-L-Ala (cyclo-TA) by the NRPS echPS via condensation of L-alanine and L-tryptophan. The prenyltransferase echPT1 then catalyzes the first prenylation step, a reverse prenylation reaction at C2, to yield preechinulin. Preechinulin is the substrate of the cytochrome P450 monooxygenase echP450 that catalyzes the formation of the double bond between C10 and C11 to produce neoechulin A. The unique prenyltransferase echPT2 functions as a competitive enzyme with echP450 for preechinulin metabolization and uses preechinulin for effective regiospecific prenylations. Preechinulin is prenylated by echPT2 at C5 or C7. C7-prenylation leads to accumulation of tardioxopiperazine B without further modification by echPT2. In contrast, the C5-prenylated tardioxopiperazine A can be prenylated again by echPT2, predominantly at C7 to form echinulin or less frequently at C4 to give variecolorin L. EchPT2 also accepts neoechilunin A to produce varlecolorin G (prenylation at C5) or isoechinulin A (prenylation at C7). EchPT2 further converts isoechinulin A into dehydroechinulin. Moreover, a yet unidentified enzyme can also convert neoechilunin A into neoechilunin B by introducing a double bond between positions C14 and C17 and thus provides a further substrate to echPT2 for C5 and C7 prenylation. The protein is Echilunin cytochrome P450 monooxygenase of Aspergillus ruber (strain CBS 135680).